Reading from the N-terminus, the 171-residue chain is Deoxyuridine 5'-triphosphate nucleotidohydrolase (171 aa).

E143 is a binding site for Mg(2+).

It belongs to the dUTPase family. In terms of assembly, homotrimer. Mg(2+) is required as a cofactor.

It carries out the reaction dUTP + H2O = dUMP + diphosphate + H(+). It participates in pyrimidine metabolism; dUMP biosynthesis; dUMP from dCTP (dUTP route): step 2/2. In terms of biological role, this enzyme is involved in nucleotide metabolism: it produces dUMP, the immediate precursor of thymidine nucleotides and it decreases the intracellular concentration of dUTP, preventing uracil incorporation into DNA. This chain is Deoxyuridine 5'-triphosphate nucleotidohydrolase (DUT), found in Oryza sativa subsp. japonica (Rice).